An 822-amino-acid chain; its full sequence is Myosin-D (822 aa).

In terms of domain architecture, Myosin motor spans 95–770 (LTYGDIGGLP…AAKMLVRLQR (676 aa)). 189-196 (GESGAGKT) is a binding site for ATP. An actin-binding region spans residues 660–670 (SHFIRCIKPND). Residues 772 to 822 (ALSAWEPLVGVFEGMTVLKRAKQLSTGRAVPATRICANVRRKLVQAGIKVC) form a tail region.

This sequence belongs to the TRAFAC class myosin-kinesin ATPase superfamily. Myosin family.

The protein localises to the cell membrane. It localises to the cytoplasm. Functionally, myosins are actin-based motor molecules with ATPase activity. Unconventional myosins serve in intracellular movements. Their highly divergent tails are presumed to bind to membranous compartments, which would be moved relative to actin filaments. The protein is Myosin-D of Toxoplasma gondii.